A 190-amino-acid polypeptide reads, in one-letter code: Putative manganese efflux pump MntP (190 aa).

6 consecutive transmembrane segments (helical) span residues 3 to 23, 41 to 61, 69 to 89, 105 to 125, 133 to 153, and 168 to 188; these read PISLLFLALAMSTDAFAAALG, LIFGAIETITPVIGWGIGQVA, DHWIAFTLLLVLGLHMIYNGI, FWILAVTAFATSIDALAVGVG, IVVAALAIGLATTVMVTIGVM, and IIGGIVLIVVGATILYEHLSA.

This sequence belongs to the MntP (TC 9.B.29) family.

The protein localises to the cell inner membrane. Probably functions as a manganese efflux pump. This Pseudomonas syringae pv. syringae (strain B728a) protein is Putative manganese efflux pump MntP.